The chain runs to 355 residues: MKFLDEAKVYIKSGDGGAGAVSFRREKFIEFGGPDGGDGGRGGDVWVEVVNGLNTLIDFRFQQHFKASIGQHGMGKTRTGAKGSDVVLKVPVGTQIFEEDNETLIMDLTKEGQRFRLAAGGNGGFGNAYFKSSTNQAPTHANPGLAGEEKTIWLRLKLIADAGLVGLPNAGKSTFLATVTRARPKIANYPFTTLHPNLGVATIDGREFVLADIPGLIEGAHEGVGIGDRFLGHVERTRVLLHLVSAQEEKVGKAYKTVKAELDAYGGGLTDKPEIVALSQIDVLDEKELKKKAKELEKACGRPPLLLSAAAHIGMTEALRALRDIIVSASNGGDTALPDRSMPHESEVEEEDDRL.

Residues 1 to 159 (MKFLDEAKVY…KTIWLRLKLI (159 aa)) form the Obg domain. In terms of domain architecture, OBG-type G spans 160–327 (ADAGLVGLPN…ALRALRDIIV (168 aa)). GTP contacts are provided by residues 166 to 173 (GLPNAGKS), 191 to 195 (FTTLH), 212 to 215 (DIPG), 279 to 282 (SQID), and 308 to 310 (SAA). Mg(2+)-binding residues include serine 173 and threonine 193. A disordered region spans residues 333–355 (GDTALPDRSMPHESEVEEEDDRL).

This sequence belongs to the TRAFAC class OBG-HflX-like GTPase superfamily. OBG GTPase family. In terms of assembly, monomer. Mg(2+) is required as a cofactor.

It localises to the cytoplasm. Its function is as follows. An essential GTPase which binds GTP, GDP and possibly (p)ppGpp with moderate affinity, with high nucleotide exchange rates and a fairly low GTP hydrolysis rate. Plays a role in control of the cell cycle, stress response, ribosome biogenesis and in those bacteria that undergo differentiation, in morphogenesis control. In Agrobacterium fabrum (strain C58 / ATCC 33970) (Agrobacterium tumefaciens (strain C58)), this protein is GTPase Obg.